Here is a 1403-residue protein sequence, read N- to C-terminus: Centrosomal protein of 162 kDa (1403 aa).

The disordered stretch occupies residues 18–42; that stretch reads KELSDDSFENSDKTARQSKKEMKKK. 2 positions are modified to phosphoserine: Ser-157 and Ser-160. The segment at 170–231 is disordered; the sequence is QANAELTDDE…EKISVPKQEE (62 aa). Positions 208 to 231 are enriched in basic and acidic residues; sequence TKDEEMPSKENSKSEKISVPKQEE. A phosphoserine mark is found at Ser-474 and Ser-475. The disordered stretch occupies residues 476–504; sequence EEEGAVMGKQVPYKKARSAPPLLKRKPQS. Residues 487–502 show a composition bias toward basic residues; it reads PYKKARSAPPLLKRKP. Coiled coils occupy residues 617-670, 698-1121, 1171-1206, and 1235-1386; these read KRVQ…QDNY, VTGE…MLSN, EVLQ…QFEN, and CQNA…LHRQ.

Belongs to the CEP162 family. Interacts with CEP290. Interacts with CPNE4. Interacts with alpha-tubulin.

The protein resides in the cytoplasm. The protein localises to the cytoskeleton. Its subcellular location is the microtubule organizing center. It is found in the centrosome. It localises to the centriole. The protein resides in the spindle. The protein localises to the nucleus. Its function is as follows. Required to promote assembly of the transition zone in primary cilia. Acts by specifically recognizing and binding the axonemal microtubule. Localizes to the distal ends of centrioles before ciliogenesis and directly binds to axonemal microtubule, thereby promoting and restricting transition zone formation specifically at the cilia base. Required to mediate CEP290 association with microtubules. This chain is Centrosomal protein of 162 kDa (CEP162), found in Homo sapiens (Human).